A 501-amino-acid chain; its full sequence is Postreplication repair E3 ubiquitin-protein ligase rad18 (501 aa).

Residues 34–72 (CHVCKDFYDSPMLTSCNHTFCSLCIRRCLSVDSKCPLCR) form an RING-type zinc finger. The segment at 111 to 154 (QAILPDQAGPSSPSKRKATEMEGPKEEDPESKRPRRSTRSTRAR) is disordered. Over residues 127–142 (KATEMEGPKEEDPESK) the composition is skewed to basic and acidic residues. Residues 143–152 (RPRRSTRSTR) show a composition bias toward basic residues. The UBZ4-type zinc-finger motif lies at 186–214 (LVACPICLTRMKEQQVDRHLDTSCPGSPQ). Zn(2+) is bound by residues Cys-189, Cys-192, His-204, and Cys-209. Residues 203-250 (RHLDTSCPGSPQAASKRRPIPAQTPQPSTFPSFNTRLTSQTNQKPPER) are disordered. Polar residues predominate over residues 225-246 (QTPQPSTFPSFNTRLTSQTNQK). In terms of domain architecture, SAP spans 256 to 290 (YSMLRDTALRKKLSELGLSTHGSRQLLEKRHKEWI). The disordered stretch occupies residues 377-501 (IKRQTLDGNG…GMKKPNPETC (125 aa)).

The protein belongs to the RAD18 family. As to quaternary structure, interacts with E2 mus-8/ubc2, forming a complex with ubiquitin ligase activity.

Its subcellular location is the nucleus. It carries out the reaction S-ubiquitinyl-[E2 ubiquitin-conjugating enzyme]-L-cysteine + [acceptor protein]-L-lysine = [E2 ubiquitin-conjugating enzyme]-L-cysteine + N(6)-ubiquitinyl-[acceptor protein]-L-lysine.. It participates in protein modification; protein ubiquitination. Functionally, E3 RING-finger protein, member of the UBC2/RAD6 epistasis group. Associates to the E2 ubiquitin conjugating enzyme mus-8/ubc2 to form the mus-8/ubc2-uvs-2/rad18 ubiquitin ligase complex involved in postreplicative repair (PRR) of damaged DNA. The chain is Postreplication repair E3 ubiquitin-protein ligase rad18 (uvs-2) from Neurospora crassa (strain ATCC 24698 / 74-OR23-1A / CBS 708.71 / DSM 1257 / FGSC 987).